The sequence spans 640 residues: 1-deoxy-D-xylulose-5-phosphate synthase (640 aa).

Residues His72 and 113–115 (GHA) contribute to the thiamine diphosphate site. Mg(2+) is bound at residue Asp144. Residues 145 to 146 (GA), Asn174, Tyr287, and Glu370 each bind thiamine diphosphate. Residue Asn174 participates in Mg(2+) binding.

Belongs to the transketolase family. DXPS subfamily. Homodimer. It depends on Mg(2+) as a cofactor. Thiamine diphosphate serves as cofactor.

The catalysed reaction is D-glyceraldehyde 3-phosphate + pyruvate + H(+) = 1-deoxy-D-xylulose 5-phosphate + CO2. It participates in metabolic intermediate biosynthesis; 1-deoxy-D-xylulose 5-phosphate biosynthesis; 1-deoxy-D-xylulose 5-phosphate from D-glyceraldehyde 3-phosphate and pyruvate: step 1/1. Its function is as follows. Catalyzes the acyloin condensation reaction between C atoms 2 and 3 of pyruvate and glyceraldehyde 3-phosphate to yield 1-deoxy-D-xylulose-5-phosphate (DXP). In Synechococcus sp. (strain RCC307), this protein is 1-deoxy-D-xylulose-5-phosphate synthase.